A 155-amino-acid chain; its full sequence is 2-C-methyl-D-erythritol 2,4-cyclodiphosphate synthase (155 aa).

Residues Asp-10, His-12, and His-46 each contribute to the a divalent metal cation site. A 4-CDP-2-C-methyl-D-erythritol 2-phosphate-binding site is contributed by 10–12; the sequence is DSH. 4-CDP-2-C-methyl-D-erythritol 2-phosphate contacts are provided by residues 60 to 62, 65 to 69, and Lys-140; these read DIG and FDEND.

It belongs to the IspF family. As to quaternary structure, homotrimer. A divalent metal cation is required as a cofactor.

It carries out the reaction 4-CDP-2-C-methyl-D-erythritol 2-phosphate = 2-C-methyl-D-erythritol 2,4-cyclic diphosphate + CMP. It functions in the pathway isoprenoid biosynthesis; isopentenyl diphosphate biosynthesis via DXP pathway; isopentenyl diphosphate from 1-deoxy-D-xylulose 5-phosphate: step 4/6. In terms of biological role, involved in the biosynthesis of isopentenyl diphosphate (IPP) and dimethylallyl diphosphate (DMAPP), two major building blocks of isoprenoid compounds. Catalyzes the conversion of 4-diphosphocytidyl-2-C-methyl-D-erythritol 2-phosphate (CDP-ME2P) to 2-C-methyl-D-erythritol 2,4-cyclodiphosphate (ME-CPP) with a corresponding release of cytidine 5-monophosphate (CMP). This chain is 2-C-methyl-D-erythritol 2,4-cyclodiphosphate synthase, found in Mycoplasmoides gallisepticum (strain R(low / passage 15 / clone 2)) (Mycoplasma gallisepticum).